We begin with the raw amino-acid sequence, 493 residues long: Glutamyl-tRNA(Gln) amidotransferase subunit A (493 aa).

Residues Lys-79 and Ser-159 each act as charge relay system in the active site. Residue Ser-183 is the Acyl-ester intermediate of the active site.

This sequence belongs to the amidase family. GatA subfamily. As to quaternary structure, heterotrimer of A, B and C subunits.

The catalysed reaction is L-glutamyl-tRNA(Gln) + L-glutamine + ATP + H2O = L-glutaminyl-tRNA(Gln) + L-glutamate + ADP + phosphate + H(+). Its function is as follows. Allows the formation of correctly charged Gln-tRNA(Gln) through the transamidation of misacylated Glu-tRNA(Gln) in organisms which lack glutaminyl-tRNA synthetase. The reaction takes place in the presence of glutamine and ATP through an activated gamma-phospho-Glu-tRNA(Gln). This chain is Glutamyl-tRNA(Gln) amidotransferase subunit A, found in Sinorhizobium fredii (strain NBRC 101917 / NGR234).